We begin with the raw amino-acid sequence, 345 residues long: Serine/threonine-protein kinase US3 homolog (345 aa).

One can recognise a Protein kinase domain in the interval 49–334; sequence FSVLETFTPG…KALLDFAAFY (286 aa). Residues 55 to 63 and K78 contribute to the ATP site; that span reads FTPGAEGFT. D162 (proton acceptor) is an active-site residue.

It belongs to the protein kinase superfamily. Ser/Thr protein kinase family. Phosphorylated by UL13 homolog; this phosphorylation regulates subsequent phosphorylation of UL31 and UL34 homologs by US3. Autophosphorylated.

The protein resides in the host cytoplasm. Its subcellular location is the host nucleus. The enzyme catalyses L-seryl-[protein] + ATP = O-phospho-L-seryl-[protein] + ADP + H(+). It carries out the reaction L-threonyl-[protein] + ATP = O-phospho-L-threonyl-[protein] + ADP + H(+). Its function is as follows. Multifunctional serine/threonine kinase that plays a role in several processes including egress of virus particles from the nucleus, modulation of the actin cytoskeleton and inhibition of apoptosis. Phosphorylates UL31 and UL34 homologs, two critical regulators of capsid budding from nucleus to endoplasmic reticulum, thereby facilitating virion egress. Modulates and redistributes host components of the nuclear envelope, including LMNA, emerin/EMD and the nuclear matrix protein MATR3. Phosphorylates envelope glycoprotein B (gB), probably to direct it to the cell surface. Promotes virus intracellular spread by restructuring host cell cytoskeleton. Blocks host apoptosis to extend cell survival and allow efficient viral replication. Promotes viral gene expression by phosphorylating host HDAC2 to reduce viral genome silencing. The sequence is that of Serine/threonine-protein kinase US3 homolog (US2) from Chlorocebus aethiops (Green monkey).